The primary structure comprises 21 residues: Glucan endo-1,3-beta-glucosidase 2 (21 aa).

Positions 1–21 are disordered; it reads APGDLLWSDEFDGAAGSAPNP.

The catalysed reaction is Hydrolysis of (1-&gt;3)-beta-D-glucosidic linkages in (1-&gt;3)-beta-D-glucans.. This is Glucan endo-1,3-beta-glucosidase 2 from Papiliotrema laurentii (Cryptococcus laurentii).